Here is a 103-residue protein sequence, read N- to C-terminus: Large ribosomal subunit protein bL21 (103 aa).

It belongs to the bacterial ribosomal protein bL21 family. As to quaternary structure, part of the 50S ribosomal subunit. Contacts protein L20.

Functionally, this protein binds to 23S rRNA in the presence of protein L20. In Aeromonas salmonicida (strain A449), this protein is Large ribosomal subunit protein bL21.